A 582-amino-acid chain; its full sequence is Aspartate--tRNA ligase (582 aa).

An L-aspartate-binding site is contributed by Glu174. The tract at residues 198-201 (QITK) is aspartate. Position 220 (Arg220) interacts with L-aspartate. ATP contacts are provided by residues 220 to 222 (RDE) and Gln229. Residue His443 participates in L-aspartate binding. Glu477 provides a ligand contact to ATP. Arg484 contacts L-aspartate. 529-532 (GLDR) is an ATP binding site.

Belongs to the class-II aminoacyl-tRNA synthetase family. Type 1 subfamily. In terms of assembly, homodimer.

It localises to the cytoplasm. It carries out the reaction tRNA(Asp) + L-aspartate + ATP = L-aspartyl-tRNA(Asp) + AMP + diphosphate. In terms of biological role, catalyzes the attachment of L-aspartate to tRNA(Asp) in a two-step reaction: L-aspartate is first activated by ATP to form Asp-AMP and then transferred to the acceptor end of tRNA(Asp). The protein is Aspartate--tRNA ligase of Streptococcus pyogenes serotype M3 (strain ATCC BAA-595 / MGAS315).